Here is a 227-residue protein sequence, read N- to C-terminus: Ribose-5-phosphate isomerase A (227 aa).

Residues 28-31 (TGST), 84-87 (DGAD), and 97-100 (KGGG) contribute to the substrate site. Residue E106 is the Proton acceptor of the active site. K124 lines the substrate pocket.

The protein belongs to the ribose 5-phosphate isomerase family. Homodimer.

The catalysed reaction is aldehydo-D-ribose 5-phosphate = D-ribulose 5-phosphate. Its pathway is carbohydrate degradation; pentose phosphate pathway; D-ribose 5-phosphate from D-ribulose 5-phosphate (non-oxidative stage): step 1/1. In terms of biological role, catalyzes the reversible conversion of ribose-5-phosphate to ribulose 5-phosphate. The protein is Ribose-5-phosphate isomerase A of Lactiplantibacillus plantarum (strain ATCC BAA-793 / NCIMB 8826 / WCFS1) (Lactobacillus plantarum).